Consider the following 307-residue polypeptide: Ornithine carbamoyltransferase (307 aa).

Residues 50–53 (STRT), Q77, R101, and 128–131 (HPCQ) contribute to the carbamoyl phosphate site. Residues N160, D224, and 228–229 (SM) contribute to the L-ornithine site. Carbamoyl phosphate is bound by residues 264–265 (CL) and R292.

The protein belongs to the aspartate/ornithine carbamoyltransferase superfamily. OTCase family. Homotrimer.

The protein resides in the cytoplasm. It catalyses the reaction carbamoyl phosphate + L-ornithine = L-citrulline + phosphate + H(+). It functions in the pathway amino-acid biosynthesis; L-arginine biosynthesis; L-arginine from L-ornithine and carbamoyl phosphate: step 1/3. Reversibly catalyzes the transfer of the carbamoyl group from carbamoyl phosphate (CP) to the N(epsilon) atom of ornithine (ORN) to produce L-citrulline, which is a substrate for argininosuccinate synthetase, the enzyme involved in the final step in arginine biosynthesis. The protein is Ornithine carbamoyltransferase (argF) of Mycobacterium bovis (strain ATCC BAA-935 / AF2122/97).